Consider the following 353-residue polypeptide: S-adenosylmethionine:tRNA ribosyltransferase-isomerase (353 aa).

Belongs to the QueA family. As to quaternary structure, monomer.

Its subcellular location is the cytoplasm. It carries out the reaction 7-aminomethyl-7-carbaguanosine(34) in tRNA + S-adenosyl-L-methionine = epoxyqueuosine(34) in tRNA + adenine + L-methionine + 2 H(+). Its pathway is tRNA modification; tRNA-queuosine biosynthesis. Its function is as follows. Transfers and isomerizes the ribose moiety from AdoMet to the 7-aminomethyl group of 7-deazaguanine (preQ1-tRNA) to give epoxyqueuosine (oQ-tRNA). The sequence is that of S-adenosylmethionine:tRNA ribosyltransferase-isomerase from Rickettsia bellii (strain RML369-C).